The sequence spans 555 residues: Oxygen-dependent choline dehydrogenase (555 aa).

4–33 contributes to the FAD binding site; the sequence is DYIIIGAGSAGNVLATRLTEDADVSVLLLE. The tract at residues 180–202 is disordered; the sequence is QQEGFGPMDRTVTPKGRRASTAR. His473 acts as the Proton acceptor in catalysis.

The protein belongs to the GMC oxidoreductase family. The cofactor is FAD.

The catalysed reaction is choline + A = betaine aldehyde + AH2. It carries out the reaction betaine aldehyde + NAD(+) + H2O = glycine betaine + NADH + 2 H(+). It functions in the pathway amine and polyamine biosynthesis; betaine biosynthesis via choline pathway; betaine aldehyde from choline (cytochrome c reductase route): step 1/1. In terms of biological role, involved in the biosynthesis of the osmoprotectant glycine betaine. Catalyzes the oxidation of choline to betaine aldehyde and betaine aldehyde to glycine betaine at the same rate. The sequence is that of Oxygen-dependent choline dehydrogenase from Serratia proteamaculans (strain 568).